Reading from the N-terminus, the 78-residue chain is Large ribosomal subunit protein bL28 (78 aa).

The protein belongs to the bacterial ribosomal protein bL28 family.

In Histophilus somni (strain 129Pt) (Haemophilus somnus), this protein is Large ribosomal subunit protein bL28.